A 510-amino-acid polypeptide reads, in one-letter code: Monocarboxylate transporter 14 (510 aa).

The Cytoplasmic portion of the chain corresponds to 1–27; it reads MYTSHEDIGYDFEDGPKDKKTLKPHPN. Helical transmembrane passes span 28–48, 74–94, 103–123, 127–147, 159–179, and 191–209; these read IDGG…ILIM, WVSS…GLFI, AIIG…AANV, FITF…PAVV, LAQG…TVLL, and AMLI…GALM. Residues 214–255 are disordered; that stretch reads PGKNPNDPGEKDVRGLPAHSTESVKSTGQQGRTEEKDGGLGN. Over residues 233–244 the composition is skewed to polar residues; sequence STESVKSTGQQG. Transmembrane regions (helical) follow at residues 315–335, 353–373, 379–399, 408–428, 443–463, and 474–494; these read MFVA…IPFI, FPLT…LGVI, ISVW…IFIL, LAVI…MPVV, GIII…AGWI, and FYIC…QPCI. Topologically, residues 495 to 510 are cytoplasmic; the sequence is RIIEQSRRKYMDGAHV.

Belongs to the major facilitator superfamily. Monocarboxylate porter (TC 2.A.1.13) family.

It is found in the cell membrane. Its function is as follows. Proton-linked monocarboxylate transporter. May catalyze the transport of monocarboxylates across the plasma membrane. In Homo sapiens (Human), this protein is Monocarboxylate transporter 14 (SLC16A14).